The primary structure comprises 439 residues: Hemagglutinin-esterase (439 aa).

The signal sequence occupies residues 1-22; sequence MGCMCIAMAPRTLLLLIGCQLV. The interval 12–132 is esterase domain 1; that stretch reads TLLLLIGCQL…DNKRWMGNKA (121 aa). Residues 23 to 407 are Virion surface-facing; it reads FGFNEPLNIV…PVCIYDPLPV (385 aa). Ser-45 acts as the Nucleophile in catalysis. Cysteines 49 and 70 form a disulfide. N-linked (GlcNAc...) asparagine; by host glycans are attached at residues Asn-94, Asn-152, Asn-196, Asn-246, Asn-309, and Asn-316. A disulfide bridge connects residues Cys-118 and Cys-167. The interval 133 to 281 is receptor binding; that stretch reads RFYARVYEKM…GNYKAVSLEY (149 aa). Cystine bridges form between Cys-202–Cys-291 and Cys-210–Cys-264. The segment at 282-395 is esterase domain 2; the sequence is LLSLPSKAIC…HCPTAANIGY (114 aa). Cysteines 322 and 327 form a disulfide. Residue Asn-331 is glycosylated (N-linked (GlcNAc...) asparagine; by host). Active-site charge relay system residues include Asp-342 and His-345. Asn-360 and Asn-374 each carry an N-linked (GlcNAc...) asparagine; by host glycan. Cysteines 363 and 387 form a disulfide. The chain crosses the membrane as a helical span at residues 408 to 428; that stretch reads ILLGVLLGIAVLIIVFLMFYF. The Intravirion portion of the chain corresponds to 429–439; it reads MTDSGVRLHEA.

The protein belongs to the influenza type C/coronaviruses hemagglutinin-esterase family. Homodimer; disulfide-linked. Forms a complex with the M protein in the pre-Golgi. Associates then with S-M complex to form a ternary complex S-M-HE. N-glycosylated in the host RER.

The protein resides in the virion membrane. Its subcellular location is the host cell membrane. It carries out the reaction N-acetyl-9-O-acetylneuraminate + H2O = N-acetylneuraminate + acetate + H(+). The enzyme catalyses N-acetyl-4-O-acetylneuraminate + H2O = N-acetylneuraminate + acetate + H(+). In terms of biological role, structural protein that makes short spikes at the surface of the virus. Contains receptor binding and receptor-destroying activities. Mediates de-O-acetylation of N-acetyl-4-O-acetylneuraminic acid, which is probably the receptor determinant recognized by the virus on the surface of erythrocytes and susceptible cells. This receptor-destroying activity is important for virus release as it probably helps preventing self-aggregation and ensures the efficient spread of the progeny virus from cell to cell. May serve as a secondary viral attachment protein for initiating infection, the spike protein being the major one. May become a target for both the humoral and the cellular branches of the immune system. The protein is Hemagglutinin-esterase of Murine coronavirus (strain S) (MHV-S).